Consider the following 145-residue polypeptide: D-aminoacyl-tRNA deacylase (145 aa).

Positions 137–138 match the Gly-cisPro motif, important for rejection of L-amino acids motif; that stretch reads GP.

The protein belongs to the DTD family. In terms of assembly, homodimer.

It is found in the cytoplasm. The catalysed reaction is glycyl-tRNA(Ala) + H2O = tRNA(Ala) + glycine + H(+). It catalyses the reaction a D-aminoacyl-tRNA + H2O = a tRNA + a D-alpha-amino acid + H(+). An aminoacyl-tRNA editing enzyme that deacylates mischarged D-aminoacyl-tRNAs. Also deacylates mischarged glycyl-tRNA(Ala), protecting cells against glycine mischarging by AlaRS. Acts via tRNA-based rather than protein-based catalysis; rejects L-amino acids rather than detecting D-amino acids in the active site. By recycling D-aminoacyl-tRNA to D-amino acids and free tRNA molecules, this enzyme counteracts the toxicity associated with the formation of D-aminoacyl-tRNA entities in vivo and helps enforce protein L-homochirality. The sequence is that of D-aminoacyl-tRNA deacylase from Limosilactobacillus reuteri (strain DSM 20016) (Lactobacillus reuteri).